The primary structure comprises 430 residues: ATP-dependent protease ATPase subunit HslU (430 aa).

ATP contacts are provided by residues Val18, 60 to 65 (GVGKTE), Asp243, Glu308, and Arg380.

It belongs to the ClpX chaperone family. HslU subfamily. As to quaternary structure, a double ring-shaped homohexamer of HslV is capped on each side by a ring-shaped HslU homohexamer. The assembly of the HslU/HslV complex is dependent on binding of ATP.

It is found in the cytoplasm. In terms of biological role, ATPase subunit of a proteasome-like degradation complex; this subunit has chaperone activity. The binding of ATP and its subsequent hydrolysis by HslU are essential for unfolding of protein substrates subsequently hydrolyzed by HslV. HslU recognizes the N-terminal part of its protein substrates and unfolds these before they are guided to HslV for hydrolysis. The sequence is that of ATP-dependent protease ATPase subunit HslU from Caulobacter vibrioides (strain ATCC 19089 / CIP 103742 / CB 15) (Caulobacter crescentus).